We begin with the raw amino-acid sequence, 1559 residues long: MSSLEVVDGCPYGYRPYPDSGTNALNPCFISVISAWQAVFFLLIGSYQLWKLYKNNKVPPRFKNFPTLPSKINSRHLTHLTNVCFQSTLIICELALVSQSSDRVYPFILKKALYLNLLFNLGISLPTQYLAYFKSTFSMGNQLFYYMFQILLQLFLILQRYYHGSSNERLTVISGQTAMILEVLLLFNSVAIFIYDLCIFEPINELSEYYKKNGWYPPVHVLSYITFIWMNKLIVETYRNKKIKDPNQLPLPPVDLNIKSISKEFKANWELEKWLNRNSLWRAIWKSFGRTISVAMLYETTSDLLSVVQPQFLRIFIDGLNPETSSKYPPLNGVFIALTLFVISVVSVFLTNQFYIGIFEAGLGIRGSLASLVYQKSLRLTLAERNEKSTGDILNLMSVDVLRIQRFFENAQTIIGAPIQIIVVLTSLYWLLGKAVIGGLVTMAIMMPINAFLSRKVKKLSKTQMKYKDMRIKTITELLNAIKSIKLYAWEEPMMARLNHVRNDMELKNFRKIGIVSNLIYFAWNCVPLMVTCSTFGLFSLFSDSPLSPAIVFPSLSLFNILNSAIYSVPSMINTIIETSVSMERLKSFLLSDEIDDSFIERIDPSADERALPAIEMNNITFLWKSKEVLTSSQSGDNLRTDEESIIGSSQIALKNIDHFEAKRGDLVCVVGRVGAGKSTFLKAILGQLPCMSGSRDSIPPKLIIRSSSVAYCSQESWIMNASVRENILFGHKFDQDYYDLTIKACQLLPDLKILPDGDETLVGEKGISLSGGQKARLSLARAVYSRADIYLLDDILSAVDAEVSKNIIEYVLIGKTALLKNKTIILTTNTVSILKHSQMIYALENGEIVEQGNYEDVMNRKNNTSKLKKLLEEFDSPIDNGNESDVQTEHRSESEVDEPLQLKVTESETEDEVVTESELELIKANSRRASLATLRPRPFVGAQLDSVKKTAQKAEKTEVGRVKTKIYLAYIKACGVLGVVLFFLFMILTRVFDLAENFWLKYWSESNEKNGSNERVWMFVGVYSLIGVASAAFNNLRSIMMLLYCSIRGSKKLHESMAKSVIRSPMTFFETTPVGRIINRFSSDMDAVDSNLQYIFSFFFKSILTYLVTVILVGYNMPWFLVFNMFLVVIYIYYQTFYIVLSRELKRLISISYSPIMSLMSESLNGYSIIDAYDHFERFIYLNYEKIQYNVDFVFNFRSTNRWLSVRLQTIGATIVLATAILALATMNTKRQLSSGMVGLLMSYSLEVTGSLTWIVRTTVTIETNIVSVERIVEYCELPPEAQSINPEKRPDENWPSKGGIEFKNYSTKYRENLDPVLNNINVKIEPCEKVGIVGRTGAGKSTLSLALFRILEPTEGKIIIDGIDISDIGLFDLRSHLAIIPQDAQAFEGTVKTNLDPFNRYSEDELKRAVEQAHLKPHLEKMLHSKPRGDDSNEEDGNVNDILDVKINENGSNLSVGQRQLLCLARALLNRSKILVLDEATASVDMETDKIIQDTIRREFKDRTILTIAHRIDTVLDSDKIIVLDQGSVREFDSPSKLLSDKTSIFYSLCEKGGYLK.

Topologically, residues 1–29 (MSSLEVVDGCPYGYRPYPDSGTNALNPCF) are vacuolar. The chain crosses the membrane as a helical span at residues 30-50 (ISVISAWQAVFFLLIGSYQLW). At 51-84 (KLYKNNKVPPRFKNFPTLPSKINSRHLTHLTNVC) the chain is on the cytoplasmic side. Residues 85–105 (FQSTLIICELALVSQSSDRVY) form a helical membrane-spanning segment. At 106–110 (PFILK) the chain is on the vacuolar side. A helical transmembrane segment spans residues 111–127 (KALYLNLLFNLGISLPT). The Cytoplasmic portion of the chain corresponds to 128-139 (QYLAYFKSTFSM). The chain crosses the membrane as a helical span at residues 140–160 (GNQLFYYMFQILLQLFLILQR). The Vacuolar portion of the chain corresponds to 161-178 (YYHGSSNERLTVISGQTA). The helical transmembrane segment at 179 to 199 (MILEVLLLFNSVAIFIYDLCI) threads the bilayer. Residues 200–283 (FEPINELSEY…WLNRNSLWRA (84 aa)) lie on the Cytoplasmic side of the membrane. The helical transmembrane segment at 284–304 (IWKSFGRTISVAMLYETTSDL) threads the bilayer. Positions 292–578 (ISVAMLYETT…VPSMINTIIE (287 aa)) constitute an ABC transmembrane type-1 1 domain. Residues 305-333 (LSVVQPQFLRIFIDGLNPETSSKYPPLNG) are Vacuolar-facing. A helical membrane pass occupies residues 334 to 354 (VFIALTLFVISVVSVFLTNQF). Topologically, residues 355-410 (YIGIFEAGLGIRGSLASLVYQKSLRLTLAERNEKSTGDILNLMSVDVLRIQRFFEN) are cytoplasmic. Residues 411-431 (AQTIIGAPIQIIVVLTSLYWL) traverse the membrane as a helical segment. The Vacuolar segment spans residues 432–434 (LGK). Residues 435 to 455 (AVIGGLVTMAIMMPINAFLSR) form a helical membrane-spanning segment. The Cytoplasmic portion of the chain corresponds to 456–518 (KVKKLSKTQM…NFRKIGIVSN (63 aa)). Residues 519-539 (LIYFAWNCVPLMVTCSTFGLF) form a helical membrane-spanning segment. The Vacuolar segment spans residues 540–560 (SLFSDSPLSPAIVFPSLSLFN). Residues 561-581 (ILNSAIYSVPSMINTIIETSV) form a helical membrane-spanning segment. The Cytoplasmic segment spans residues 582–972 (SMERLKSFLL…VKTKIYLAYI (391 aa)). The region spanning 639 to 871 (LRTDEESIIG…KNNTSKLKKL (233 aa)) is the ABC transporter 1 domain. Serine 645 bears the Phosphoserine mark. Residue 672 to 679 (GRVGAGKS) participates in ATP binding. The segment at 877 to 899 (SPIDNGNESDVQTEHRSESEVDE) is disordered. A Phosphoserine modification is found at serine 885. The residue at position 889 (threonine 889) is a Phosphothreonine. Phosphoserine occurs at positions 893 and 895. Phosphothreonine is present on threonine 916. Phosphoserine is present on residues serine 927 and serine 931. Threonine 934 is modified (phosphothreonine). The helical transmembrane segment at 973–993 (KACGVLGVVLFFLFMILTRVF) threads the bilayer. The ABC transmembrane type-1 2 domain occupies 980-1265 (VVLFFLFMIL…IVRTTVTIET (286 aa)). Residues 994-1030 (DLAENFWLKYWSESNEKNGSNERVWMFVGVYSLIGVA) lie on the Vacuolar side of the membrane. N-linked (GlcNAc...) asparagine glycosylation is present at asparagine 1011. The chain crosses the membrane as a helical span at residues 1031–1052 (SAAFNNLRSIMMLLYCSIRGSK). The Cytoplasmic segment spans residues 1053 to 1095 (KLHESMAKSVIRSPMTFFETTPVGRIINRFSSDMDAVDSNLQY). The chain crosses the membrane as a helical span at residues 1096-1116 (IFSFFFKSILTYLVTVILVGY). Asparagine 1117 is a topological domain (vacuolar). The chain crosses the membrane as a helical span at residues 1118-1138 (MPWFLVFNMFLVVIYIYYQTF). The Cytoplasmic segment spans residues 1139–1209 (YIVLSRELKR…STNRWLSVRL (71 aa)). Residues 1210-1230 (QTIGATIVLATAILALATMNT) traverse the membrane as a helical segment. The Vacuolar portion of the chain corresponds to 1231–1235 (KRQLS). A helical membrane pass occupies residues 1236 to 1256 (SGMVGLLMSYSLEVTGSLTWI). Residues 1257–1559 (VRTTVTIETN…SLCEKGGYLK (303 aa)) are Cytoplasmic-facing. Residues 1302–1553 (IEFKNYSTKY…KTSIFYSLCE (252 aa)) enclose the ABC transporter 2 domain. 1336–1343 (GRTGAGKS) is a binding site for ATP. The span at 1420-1433 (HLEKMLHSKPRGDD) shows a compositional bias: basic and acidic residues. The tract at residues 1420 to 1439 (HLEKMLHSKPRGDDSNEEDG) is disordered.

It belongs to the ABC transporter superfamily.

It is found in the vacuole membrane. Its function is as follows. Cooperates for the ATP-dependent vacuolar transport of bilirubin and glutathione conjugates. This chain is Bile pigment transporter 1 (BPT1), found in Saccharomyces cerevisiae (strain ATCC 204508 / S288c) (Baker's yeast).